We begin with the raw amino-acid sequence, 1869 residues long: MAMNLPPLAGSGGAHTQPSLPALPAHLQSDTHLTAHLASRFHLSLPTAQLSSHALISLNTYTSSSKGPDGGKEGSAMAGAEEMAERAWLRLGHRSENQAVVFLGESGSGKSTLRSHLLASLLNKSSTPLSTKVSLAAYVFDTLTTTKTATTPTASKAGLFYELQYDTASTTNPVLIGGKLLDHRLERSRIADVPTGERNFHVLYYLLAGTSPAEKAHLGLEDSAVQQRRWKYLGHPTQLKVGINDAEGFQVFKNALKKLEFPRSEIAEICQILASVLHIGQLEFESSANTQVTGDDSGGFSHEGATVVTAAKNKDVLAIIAAFLGVNAQDLQNTLSYKTKMIHKERVTVMLDPNGARSHANELARTIYSLLVTYIIESINQRLCAADDAVANTISIIDFPGFEQQASTKSALDQLLNNSATEALYNLTLQNFFDRKADMLENEEVSVAATSYFDNSDAVRGLLKPGNGLLSILDDQSRRHRTDIQFLESMRKRFEGKNPAITAGSSTAKLPGSNFLTENSAPIFTVKHFAGEVDYQVKGLTEENGEVISGDLLNMINSTKSEFVARLFGQDALQTVTHPKERSTVMQATISSKPMRTPSVMSRKTARTARNQRVLQQKAAEEELEKLSENNSQAGGAAKAAASEQGASGQFLAALDNVTKAVADPSTNSYFVFCLKPNDRRIASQFDSKCVRTQVQTFGIAEISQRLRSADFSLFLPFGEFLGLADAETILMGSERERVEMVVEDKRWPSNEVRIGSTGVFVSERCWMEIAHLSEASLAHGRFGLPSDGGDGLTPHGASPADPFAASKERLLSTGNTPLMYGEKGKNGYFGANDGSDSRSEAGVSAFGGGDMFKNFDTREQMAERGNEKSLVEVEEYRDSASRKRWLFMVYLLTWFIPDFLIRFIGRMPRKDVRMAWREKLAINLIIWLSCLLAAFFIVVFPMLICPRQHVYSAAELSAYDGSSGSPGAYVSIRGYVFDLEKFAPRHYPPNLVSTEDILEYAGKDATSLFPVQVSALCQGRAGSIDPAVLIDYRSTNVTGSPTLISQQDINANFHDFRYFTNDTRKDWYFQQMAMLRANYLKGRIGYSPKYMKTLARNSRTIVSMNGRVFDLTEYVVGGRRTVGEDGKDISGVAEDSYDFMEPDVVTLFRQLSGADATRHWASLNLSEQAKTRMLTCLNNLFYVGDVDTRSSVRCKFAEYLVLAISIMLVTIIAFKFFAALQFGTKNMPENLDKFIMCQIPAYTEDEDSLRRAIDSAARMHYDDKRKLLVVICDGMIVGQGNDRSTPRIVLDILGVSETVDPEPLSFESLGEGLKQHNMGKVYSGLYEVQGHIVPFLVVVKVGKPSEVSRPGNRGKRDSQMVIMRFLNRVHYNLAMSPLELEMYHQIRNIIGVNPTFYEFMFQIDADTVVAPDSATRMVSAFLDDTRLIAVCGETALTNAKSSFITMIQVYEYWISHNLTKAFESLFGSVTCLPGCFSMYRIRAAETGKPLFVSREIVEAYATIRVDTLHMKNLLHLGEDRYLTTLLLKFHNKYKTKYIFRAHAWTIAPDSWAVFMSQRRRWINSTVHNLIELIPMAQLCGFCCFSMRFIVFVDLLSTVLQPVTMAYIVYLIVMVIRSPDVVPVTAFILIAAVFGLQAIIFILRRKWEMIGWMVLYILAIPVFSFGLPLYSFWYMDDFNWGNTRVVAGEKGKKIIVTDEGKFDPASIPRKKWEEYQGEIWEAQTVRDDARSEVSGFSYATKGHPGVQVGVSEYGGYSRPGSIAGGFSGAHAMPPLPMNTSRMSLAASEMGGNRASQFGGSQYFSPEDMVGLPSDDALLAEIREILRTADLMTVTKKGIKQELERRFGVPLDAKRAYINSATEALLSGQL.

The tract at residues 1–23 (MAMNLPPLAGSGGAHTQPSLPAL) is disordered. In terms of domain architecture, Myosin motor spans 1–778 (MAMNLPPLAG…EIAHLSEASL (778 aa)). Residue 104-111 (GESGSGKS) coordinates ATP. N-linked (GlcNAc...) asparagine glycans are attached at residues Asn123, Asn417, Asn426, and Asn557. 2 disordered regions span residues 593–612 (KPMR…ARNQ) and 620–640 (AEEE…AAKA). Positions 629–640 (ENNSQAGGAAKA) are enriched in low complexity. Residues Asn630 and Asn657 are each glycosylated (N-linked (GlcNAc...) asparagine). Residues 655–679 (LDNVTKAVADPSTNSYFVFCLKPND) form an actin-binding region. 2 consecutive transmembrane segments (helical) span residues 886 to 906 (WLFM…RFIG) and 925 to 945 (LIIW…PMLI). In terms of domain architecture, Cytochrome b5 heme-binding spans 949-1010 (QHVYSAAELS…YAGKDATSLF (62 aa)). 3 N-linked (GlcNAc...) asparagine glycosylation sites follow: Asn1037, Asn1062, and Asn1165. The chain crosses the membrane as a helical span at residues 1201 to 1221 (LVLAISIMLVTIIAFKFFAAL). Residues Asn1458 and Asn1564 are each glycosylated (N-linked (GlcNAc...) asparagine). A run of 3 helical transmembrane segments spans residues 1596–1616 (LSTV…VMVI), 1622–1642 (VPVT…IIFI), and 1649–1669 (MIGW…GLPL). N-linked (GlcNAc...) asparagine glycosylation occurs at Asn1778. The region spanning 1811 to 1866 (LPSDDALLAEIREILRTADLMTVTKKGIKQELERRFGVPLDAKRAYINSATEALLS) is the DEK-C domain.

The protein in the N-terminal section; belongs to the TRAFAC class myosin-kinesin ATPase superfamily. Myosin family. In the C-terminal section; belongs to the chitin synthase family. Class V subfamily.

Its subcellular location is the cell membrane. It catalyses the reaction [(1-&gt;4)-N-acetyl-beta-D-glucosaminyl](n) + UDP-N-acetyl-alpha-D-glucosamine = [(1-&gt;4)-N-acetyl-beta-D-glucosaminyl](n+1) + UDP + H(+). In terms of biological role, polymerizes chitin, a structural polymer of the cell wall and septum, by transferring the sugar moiety of UDP-GlcNAc to the non-reducing end of the growing chitin polymer. Plays a role in cell wall integrity and is involved in tolerance to hyperosmotic conditions. Required to successfully penetrate the host plants and thus plays a key role in pathogenicity. This Verticillium dahliae (strain VdLs.17 / ATCC MYA-4575 / FGSC 10137) (Verticillium wilt) protein is Chitin synthase 6.